Here is a 491-residue protein sequence, read N- to C-terminus: Peptidoglycan D,D-transpeptidase PbpA (491 aa).

At 1–8 the chain is on the cytoplasmic side; sequence MNTSLRRV. Residues 9 to 29 traverse the membrane as a helical; Signal-anchor for type II membrane protein segment; that stretch reads AVAIMVLIVLLLANATVTQVF. The Periplasmic segment spans residues 30–491; sequence AADGLRADPR…TIAAALREGS (462 aa). Residues 160 to 484 form a transpeptidase region; the sequence is GSVVALEPST…AAPIGRATIA (325 aa). The active-site Acyl-ester intermediate is the Ser-222.

The protein belongs to the transpeptidase family.

It is found in the cell inner membrane. The enzyme catalyses Preferential cleavage: (Ac)2-L-Lys-D-Ala-|-D-Ala. Also transpeptidation of peptidyl-alanyl moieties that are N-acyl substituents of D-alanine.. Its pathway is cell wall biogenesis; peptidoglycan biosynthesis. Transpeptidase that catalyzes cross-linking of the peptidoglycan cell wall. Required for the regulation of cell length. In Mycolicibacterium smegmatis (strain ATCC 700084 / mc(2)155) (Mycobacterium smegmatis), this protein is Peptidoglycan D,D-transpeptidase PbpA (pbpA).